We begin with the raw amino-acid sequence, 630 residues long: MVLQKRPDYGFNGYEVPHTPRAARSPRKSAFKKKSENHQISSFDLLAAVAGKLLLEGGNSSSSSNNTSGNNEDQCAVKKEPLNGGDIMVEEETTNSDHDNNNAERSFFVSEILQKSHEMQSFNRSPSPLKEFHFGSSSGITSDSSEKFETQELAYDESKINNGDCYRSESNDKKSMLGGLNFEAKLSRNVVGKDEKHIGSGFRKPIPQNPSTCSDDVDLHGKENDDGENFSACYRTKSFRSTLRIGDRRIRKVWASKYCKVPPKLKDTTVTNSDLDLKSDYYSKKHCLKSLRSERNYPIKKRRYFDGYTASQSEETNKNEGQSGSPRKASAFLSSIACQKQPAAFQSPRDSNNVKLGIKSFRVPELFIEIPETATVGSLKRTVLEAVTSILGGGLRIGVLVHGKKVRDDSKMLLQTGLSLDTLSDTLGFCLEPNPPQSTKPLSPEDSDFARPCNVPHTLTRCLPSPGKHAKPSNSVESDLDSKPSAPNRGKTIYSRALIPVSPLHAQALTVVPPRKTKRSEVAQRRIRRPFSVAEVEALVQAVERLGTGRWRDVKLRAFDNAKHRTYVDLKDKWKTLVHTARISPQQRRGEPVPQELLDRVLTAHAYWSQQQGKHQLLEGPQQLETSLGL.

3 disordered regions span residues 1 to 38 (MVLQ…SENH), 56 to 78 (EGGN…CAVK), and 308 to 327 (YTAS…GSPR). Low complexity predominate over residues 57-71 (GGNSSSSSNNTSGNN). Positions 309 to 325 (TASQSEETNKNEGQSGS) are enriched in polar residues. The 80-residue stretch at 354–433 (VKLGIKSFRV…SDTLGFCLEP (80 aa)) folds into the Ubiquitin-like domain. Residues 463–489 (LPSPGKHAKPSNSVESDLDSKPSAPNR) form a disordered region. In terms of domain architecture, HTH myb-type spans 523 to 582 (AQRRIRRPFSVAEVEALVQAVERLGTGRWRDVKLRAFDNAKHRTYVDLKDKWKTLVHTAR). Residues 551 to 578 (WRDVKLRAFDNAKHRTYVDLKDKWKTLV) constitute a DNA-binding region (H-T-H motif).

Homodimer. As to expression, expressed ubiquitously.

Its subcellular location is the nucleus. Binds specifically to the plant telomeric double-stranded DNA sequences. At least 6 repeats of telomeric sequences are required for binding. This Arabidopsis thaliana (Mouse-ear cress) protein is Telomere repeat-binding protein 5 (TRP5).